Here is a 91-residue protein sequence, read N- to C-terminus: Cell division topological specificity factor (91 aa).

This sequence belongs to the MinE family.

Its function is as follows. Prevents the cell division inhibition by proteins MinC and MinD at internal division sites while permitting inhibition at polar sites. This ensures cell division at the proper site by restricting the formation of a division septum at the midpoint of the long axis of the cell. This is Cell division topological specificity factor from Erwinia tasmaniensis (strain DSM 17950 / CFBP 7177 / CIP 109463 / NCPPB 4357 / Et1/99).